Reading from the N-terminus, the 189-residue chain is MSHMPELEASVLPADAVEVGRIADAWGIKGWFKVAAFSADPEALFTAKQWYLQPPEKGARQFTGTVLLPVKQARVHSDSVVATSPVVNDRNTAEALRGARIFVARSDFPQPEDGEYYWVDLLGLSVVNREGVVLGVVRDLLSTGPQTVLVLAYEEDGKERERMIPFVDAYVDKVDLPGKTIVADWQPDY.

The PRC barrel domain occupies 113–189; sequence DGEYYWVDLL…TIVADWQPDY (77 aa).

The protein belongs to the RimM family. As to quaternary structure, binds ribosomal protein uS19.

It localises to the cytoplasm. Its function is as follows. An accessory protein needed during the final step in the assembly of 30S ribosomal subunit, possibly for assembly of the head region. Essential for efficient processing of 16S rRNA. May be needed both before and after RbfA during the maturation of 16S rRNA. It has affinity for free ribosomal 30S subunits but not for 70S ribosomes. The protein is Ribosome maturation factor RimM of Delftia acidovorans (strain DSM 14801 / SPH-1).